A 186-amino-acid chain; its full sequence is Large ribosomal subunit protein uL5 (186 aa).

The protein belongs to the universal ribosomal protein uL5 family. In terms of assembly, part of the 50S ribosomal subunit; part of the 5S rRNA/L5/L18/L25 subcomplex. Contacts the 5S rRNA and the P site tRNA. Forms a bridge to the 30S subunit in the 70S ribosome.

Functionally, this is one of the proteins that bind and probably mediate the attachment of the 5S RNA into the large ribosomal subunit, where it forms part of the central protuberance. In the 70S ribosome it contacts protein S13 of the 30S subunit (bridge B1b), connecting the 2 subunits; this bridge is implicated in subunit movement. Contacts the P site tRNA; the 5S rRNA and some of its associated proteins might help stabilize positioning of ribosome-bound tRNAs. This is Large ribosomal subunit protein uL5 from Maricaulis maris (strain MCS10) (Caulobacter maris).